Consider the following 213-residue polypeptide: ATP phosphoribosyltransferase (213 aa).

This sequence belongs to the ATP phosphoribosyltransferase family. Short subfamily. In terms of assembly, heteromultimer composed of HisG and HisZ subunits.

The protein localises to the cytoplasm. The catalysed reaction is 1-(5-phospho-beta-D-ribosyl)-ATP + diphosphate = 5-phospho-alpha-D-ribose 1-diphosphate + ATP. The protein operates within amino-acid biosynthesis; L-histidine biosynthesis; L-histidine from 5-phospho-alpha-D-ribose 1-diphosphate: step 1/9. Functionally, catalyzes the condensation of ATP and 5-phosphoribose 1-diphosphate to form N'-(5'-phosphoribosyl)-ATP (PR-ATP). Has a crucial role in the pathway because the rate of histidine biosynthesis seems to be controlled primarily by regulation of HisG enzymatic activity. This chain is ATP phosphoribosyltransferase, found in Listeria welshimeri serovar 6b (strain ATCC 35897 / DSM 20650 / CCUG 15529 / CIP 8149 / NCTC 11857 / SLCC 5334 / V8).